A 106-amino-acid chain; its full sequence is uncharacterized protein (106 aa).

This is an uncharacterized protein from Methanocaldococcus jannaschii (strain ATCC 43067 / DSM 2661 / JAL-1 / JCM 10045 / NBRC 100440) (Methanococcus jannaschii).